Consider the following 220-residue polypeptide: Putative O-methyltransferase Mjls_4009 (220 aa).

Residues Val47, Glu69, 71–72 (GT), Ser77, Asp95, and Val96 each bind S-adenosyl-L-methionine. Asp143 contributes to the substrate binding site. S-adenosyl-L-methionine is bound at residue Asp145.

It belongs to the class I-like SAM-binding methyltransferase superfamily. Cation-dependent O-methyltransferase family.

The sequence is that of Putative O-methyltransferase Mjls_4009 from Mycobacterium sp. (strain JLS).